Reading from the N-terminus, the 226-residue chain is ATP synthase subunit C lysine N-methyltransferase (226 aa).

The chain crosses the membrane as a helical span at residues 35–55 (VIGGTLVALYAVATPFVAPAL). Residues 48 to 82 (TPFVAPALRKLCLPYVPATTTQVKNVLKMLRSRTG) form a required for mitochondrial location region.

This sequence belongs to the ANT/ATPSC lysine N-methyltransferase family.

It is found in the mitochondrion membrane. In terms of biological role, mitochondrial protein-lysine N-methyltransferase that promotes chronic pain. Involved in persistent inflammatory and neuropathic pain: methyltransferase activity in the mitochondria of sensory neurons promotes chronic pain via a pathway that depends on the production of reactive oxygen species (ROS) and on the engagement of spinal cord microglia. Protein-lysine N-methyltransferase activity is dependent on S-adenosyl-L-methionine. The protein is ATP synthase subunit C lysine N-methyltransferase (atpsckmt) of Xenopus laevis (African clawed frog).